The sequence spans 585 residues: Conglutin alpha 3 (585 aa).

The N-terminal stretch at 1–23 (MANPFLLSLSLCLVLLYTSACLG) is a signal peptide. Disulfide bonds link C32–C65 and C108–C406. Residues 37–258 (LNALEPDNRI…ALNIDEDTVH (222 aa)) form the Cupin type-1 1 domain. Disordered regions lie at residues 113–147 (EEAQQSQSRQERRRGQRSQSQEQEDSHQKIRHFRE), 199–240 (EEYP…ILSG), and 283–402 (KWQE…NGLE). The span at 136–147 (EDSHQKIRHFRE) shows a compositional bias: basic and acidic residues. A compositionally biased stretch (basic residues) spans 211–224 (RQQHQRPSGRRHGQ). Over residues 309 to 320 (REEEEKEEEDEP) the composition is skewed to acidic residues. Residues 338–350 (ERGRGRGGSEWKR) are compositionally biased toward basic and acidic residues. Residues 412 to 558 (ENIADPTRAD…AFRLSLNQVS (147 aa)) form the Cupin type-1 2 domain. A compositionally biased stretch (polar residues) spans 565-579 (NHNPLVTPQSQSQDH). The tract at residues 565–585 (NHNPLVTPQSQSQDHNLVKVA) is disordered.

This sequence belongs to the 11S seed storage protein (globulins) family. As to quaternary structure, hexamer; each subunit is composed of an acidic and a basic chain derived from a single precursor and linked by a disulfide bond. Component of globulins complexes which accumulate in seeds.

Functionally, sulfur-rich seed storage protein. This protein found in the seeds of many leguminous and non-leguminous plants is the source of sulfur-containing amino acids in seed meals. This chain is Conglutin alpha 3, found in Lupinus angustifolius (Narrow-leaved blue lupine).